A 188-amino-acid polypeptide reads, in one-letter code: Putative manganese efflux pump MntP (188 aa).

Helical transmembrane passes span 3–23 (FYAL…VALA), 35–55 (IAAT…AGWV), 63–83 (FISE…GLKM), 104–126 (WMTV…GLAF), 140–160 (MATT…GVLF), and 167–187 (AGGL…LGLI).

It belongs to the MntP (TC 9.B.29) family.

It is found in the cell inner membrane. Functionally, probably functions as a manganese efflux pump. The sequence is that of Putative manganese efflux pump MntP from Neisseria meningitidis serogroup B (strain ATCC BAA-335 / MC58).